A 160-amino-acid chain; its full sequence is Nascent polypeptide-associated complex subunit beta (160 aa).

Disordered regions lie at residues Gly16–Asp36 and Glu118–Glu160. Basic residues predominate over residues Thr20 to Lys30. The NAC-A/B domain maps to Gly33 to Val98. Residues Gln124 to Lys134 show a composition bias toward basic and acidic residues. The segment covering Asp135–Pro145 has biased composition (acidic residues).

Belongs to the NAC-beta family. In terms of assembly, part of the nascent polypeptide-associated complex (NAC), consisting of EGD2 and EGD1. NAC associates with ribosomes via EGD1.

Its subcellular location is the cytoplasm. It is found in the nucleus. Component of the nascent polypeptide-associated complex (NAC), a dynamic component of the ribosomal exit tunnel, protecting the emerging polypeptides from interaction with other cytoplasmic proteins to ensure appropriate nascent protein targeting. The NAC complex also promotes mitochondrial protein import by enhancing productive ribosome interactions with the outer mitochondrial membrane and blocks the inappropriate interaction of ribosomes translating non-secretory nascent polypeptides with translocation sites in the membrane of the endoplasmic reticulum. EGD1 may act as a transcription factor that exert a negative effect on the expression of several genes that are transcribed by RNA polymerase II. The polypeptide is Nascent polypeptide-associated complex subunit beta (EGD1) (Phaeosphaeria nodorum (strain SN15 / ATCC MYA-4574 / FGSC 10173) (Glume blotch fungus)).